The chain runs to 708 residues: MPVRFKGLSEYQRNFLWKKSYLSESYNPSVGQKYSWAGLRSDQLGITKEPGFISKRRVPYHDPQISKYLEWNGTVRKKDTLVPPEPQAFGTPKPQEAEQGEDANQEAVLSLEASRVPKRTRSHSADSRAEGVSDTVEKHQGVTRSHAPVSADVELRPSSKQPLSQSIDPRLDRHLRKKAGLAVVPTNNALRNSEYQRQFVWKTSKESAPVFASNQVFRNKSQIIPQFQGNTFTHETEYKRNFKGLTPVKEPKSREYLKGNSSLEMLTPVKKADEPLDLEVDMASEDSDQSVKKPASWRHQRLGKVNSEYRAKFLSPAQYFYKAGAWTRVKENLSNQVKELREKAESYRKRVQGTHFSRDHLNQIMSDSNCCWDVSSVTSSEGTVSSNIRALDLAGDLTNHRTPQKHPPTKLEERKVASGEQPLKNSTRRLEMPEPAASVRRKLAWDAEESTKEDTQEEPRAEEDGREERGQDKQTCAVELEKPDTQTPKADRLTEGSETSSVSSGKGGRLPTPRLRELGIQRTHHDLTTPAVGGAVLVSPSKVKPPGLEQRRRASSQDGLETLKKDITKKGKPRPMSLLTSPAAGMKTVDPLPLREDCEANVLRFADTLPVSKILDRQPSTPGQLPPCAPPYCHPSSRIQGRLRDPEFQHNMGKPRTNNLQLHPHDAFNDEDADRLSEISARSAVSSLRAFQTLARAQKRKENFWGKP.

Positions 9-15 (SEYQRNF) match the ST]-E-Y-X(3)-F motif 1; required for efficient microtubule binding and stabilization motif. Positions 79 to 166 (DTLVPPEPQA…PSSKQPLSQS (88 aa)) are disordered. The span at 123 to 140 (HSADSRAEGVSDTVEKHQ) shows a compositional bias: basic and acidic residues. S124 and S127 each carry phosphoserine. The ST]-E-Y-X(3)-F motif 2; required for efficient microtubule binding and stabilization motif lies at 193–199 (SEYQRQF). The short motif at 236–242 (TEYKRNF) is the ST]-E-Y-X(3)-F motif 3; required for efficient microtubule binding element. A phosphoserine mark is found at S284 and S287. The ST]-E-Y-X(3)-F motif 4; required for efficient microtubule binding and stabilization motif lies at 307–313 (SEYRAKF). S315 carries the post-translational modification Phosphoserine. A coiled-coil region spans residues 322–355 (KAGAWTRVKENLSNQVKELREKAESYRKRVQGTH). Residues 394–590 (AGDLTNHRTP…SPAAGMKTVD (197 aa)) are disordered. S418 is modified (phosphoserine). 3 stretches are compositionally biased toward basic and acidic residues: residues 443 to 472 (LAWD…RGQD), 479 to 495 (ELEK…RLTE), and 514 to 527 (RLRE…HHDL). Phosphoserine occurs at positions 555, 556, and 581.

Belongs to the MDM1 family. In terms of tissue distribution, widely expressed. Expressed at high levels in the testis.

The protein localises to the nucleus. It is found in the cytoplasm. Its subcellular location is the cytoskeleton. It localises to the microtubule organizing center. The protein resides in the centrosome. The protein localises to the centriole. Its function is as follows. Microtubule-binding protein that negatively regulates centriole duplication. Binds to and stabilizes microtubules. In Mus musculus (Mouse), this protein is Nuclear protein MDM1 (Mdm1).